We begin with the raw amino-acid sequence, 355 residues long: UDP-N-acetylglucosamine--N-acetylmuramyl-(pentapeptide) pyrophosphoryl-undecaprenol N-acetylglucosamine transferase (355 aa).

Residues 15–17, Asn127, Arg163, Ser191, Ile244, 263–268, and Gln288 contribute to the UDP-N-acetyl-alpha-D-glucosamine site; these read TGG and ALTVSE.

This sequence belongs to the glycosyltransferase 28 family. MurG subfamily.

The protein resides in the cell inner membrane. The catalysed reaction is di-trans,octa-cis-undecaprenyl diphospho-N-acetyl-alpha-D-muramoyl-L-alanyl-D-glutamyl-meso-2,6-diaminopimeloyl-D-alanyl-D-alanine + UDP-N-acetyl-alpha-D-glucosamine = di-trans,octa-cis-undecaprenyl diphospho-[N-acetyl-alpha-D-glucosaminyl-(1-&gt;4)]-N-acetyl-alpha-D-muramoyl-L-alanyl-D-glutamyl-meso-2,6-diaminopimeloyl-D-alanyl-D-alanine + UDP + H(+). Its pathway is cell wall biogenesis; peptidoglycan biosynthesis. Its function is as follows. Cell wall formation. Catalyzes the transfer of a GlcNAc subunit on undecaprenyl-pyrophosphoryl-MurNAc-pentapeptide (lipid intermediate I) to form undecaprenyl-pyrophosphoryl-MurNAc-(pentapeptide)GlcNAc (lipid intermediate II). The sequence is that of UDP-N-acetylglucosamine--N-acetylmuramyl-(pentapeptide) pyrophosphoryl-undecaprenol N-acetylglucosamine transferase from Escherichia coli O9:H4 (strain HS).